The chain runs to 163 residues: Choriogonadotropin subunit beta (163 aa).

An N-terminal signal peptide occupies residues 1–20; sequence MEMLQGLLLCLLLSTGGAWA. 6 disulfides stabilise this stretch: cysteine 29–cysteine 76, cysteine 43–cysteine 91, cysteine 46–cysteine 129, cysteine 54–cysteine 107, cysteine 58–cysteine 109, and cysteine 112–cysteine 119. N-linked (GlcNAc...) asparagine glycosylation is present at asparagine 50. Residue asparagine 124 is glycosylated (N-linked (GlcNAc...) asparagine). The segment covering 135 to 151 has biased composition (polar residues); that stretch reads QDSSSNVPPSNLTSPSQ. Positions 135-163 are disordered; it reads QDSSSNVPPSNLTSPSQLLEPAVTPLVPQ. A glycan (O-linked (GalNAc...) serine) is linked at serine 139. N-linked (GlcNAc...) asparagine glycosylation is present at asparagine 145. The O-linked (GalNAc...) serine glycan is linked to serine 150.

It belongs to the glycoprotein hormones subunit beta family. Heterodimer of a common alpha chain and a unique beta chain which confers biological specificity to thyrotropin, lutropin, follitropin and gonadotropin.

The protein resides in the secreted. Its function is as follows. Stimulates the ovaries to synthesize the steroids that are essential for the maintenance of pregnancy. This Saimiri boliviensis boliviensis (Bolivian squirrel monkey) protein is Choriogonadotropin subunit beta (CGB).